Consider the following 497-residue polypeptide: Hexokinase-1 (497 aa).

Residues 4-24 (ATVGAAVIGAATVCAVAALIV) form a helical membrane-spanning segment. Residues 35–487 (ARAMAILREF…SGIGAALLAA (453 aa)) enclose the Hexokinase domain. The tract at residues 90-228 (TGDEAGVFYA…GVDMRVSALV (139 aa)) is hexokinase small subdomain. ADP contacts are provided by Gly-104, Thr-105, and Asn-106. Residues Thr-194, Lys-195, Asn-229, and Asp-230 each contribute to the D-glucose site. Positions 229–476 (NDTVGTLAGG…TSIVFEHSND (248 aa)) are hexokinase large subdomain. Residue Thr-253 coordinates ADP. Asn-256, Glu-284, and Glu-315 together coordinate D-glucose. An ADP-binding site is contributed by Gly-441.

Belongs to the hexokinase family.

Its subcellular location is the plastid. It is found in the chloroplast outer membrane. It carries out the reaction a D-hexose + ATP = a D-hexose 6-phosphate + ADP + H(+). It catalyses the reaction D-fructose + ATP = D-fructose 6-phosphate + ADP + H(+). The catalysed reaction is D-glucose + ATP = D-glucose 6-phosphate + ADP + H(+). It functions in the pathway carbohydrate metabolism; hexose metabolism. Its pathway is carbohydrate degradation; glycolysis; D-glyceraldehyde 3-phosphate and glycerone phosphate from D-glucose: step 1/4. Fructose and glucose phosphorylating enzyme. This Nicotiana tabacum (Common tobacco) protein is Hexokinase-1 (HXK1).